The primary structure comprises 147 residues: MRTYQPKPADVQRAWHIIDATDVVLGRLASQAAQLLRGKNKPYFAPHIDTGDFVVIINAGKVAMTGNKREQAKYHRHSGFPGGLRSTSYGELLDTRPHVIVERAIRGMLPHNRLGRAQGSKLKVYAGPTHPHQAQQPVPYEIKQVAQ.

The disordered stretch occupies residues 126-147 (AGPTHPHQAQQPVPYEIKQVAQ).

This sequence belongs to the universal ribosomal protein uL13 family. Part of the 50S ribosomal subunit.

Its function is as follows. This protein is one of the early assembly proteins of the 50S ribosomal subunit, although it is not seen to bind rRNA by itself. It is important during the early stages of 50S assembly. The protein is Large ribosomal subunit protein uL13 of Parafrankia sp. (strain EAN1pec).